A 512-amino-acid polypeptide reads, in one-letter code: Protein maelstrom homolog (512 aa).

Positions 9-75 (AKGPFYFFMM…NPKEAGGYGE (67 aa)) form a DNA-binding region, HMG box. Disordered regions lie at residues 49-72 (APHE…EAGG), 360-421 (RMSK…GTRA), and 439-465 (QSAN…DPQS). Residues 360-370 (RMSKLTTTSDN) show a composition bias toward polar residues. A compositionally biased stretch (basic and acidic residues) spans 379 to 388 (RSTDRTDRDV). Polar residues-rich tracts occupy residues 393 to 421 (IYSS…GTRA) and 439 to 449 (QSANRSPTKKN). Positions 451–464 (WSRENKLTEVRDPQ) are enriched in basic and acidic residues.

This sequence belongs to the maelstrom family.

The protein localises to the cytoplasm. The protein resides in the nucleus. Plays a central role during gametogenesis by repressing transposable elements and preventing their mobilization, which is essential for the germline integrity. Probably acts via the piRNA metabolic process, which mediates the repression of transposable elements during meiosis by forming complexes composed of piRNAs and Piwi proteins and governs the repression of transposons. The sequence is that of Protein maelstrom homolog (mael) from Culex quinquefasciatus (Southern house mosquito).